A 340-amino-acid polypeptide reads, in one-letter code: Nuclear transcription factor Y subunit A-3 (340 aa).

Positions 43 to 116 are disordered; that stretch reads SLSLKVDSRP…KGFASNPKQG (74 aa). A compositionally biased stretch (low complexity) spans 60-77; that stretch reads QISFQDQDSSSTQSTGQS. Over residues 78-103 the composition is skewed to polar residues; sequence YTEVASSGDDNPSRQISFSAKSGSEI. The Subunit association domain (SAD) motif lies at 182 to 205; that stretch reads FVNAKQYHAIMRRRQQRAKLEAQN. The NFYA/HAP2-type DNA-binding region spans 212-237; sequence KPYLHESRHVHALKRPRGSGGRFLNT.

Belongs to the NFYA/HAP2 subunit family. As to quaternary structure, heterotrimeric transcription factor composed of three components, NF-YA, NF-YB and NF-YC. NF-YB and NF-YC must interact and dimerize for NF-YA association and DNA binding. As to expression, ubiquitous.

The protein localises to the nucleus. Its function is as follows. Stimulates the transcription of various genes by recognizing and binding to a CCAAT motif in promoters. The protein is Nuclear transcription factor Y subunit A-3 (NFYA3) of Arabidopsis thaliana (Mouse-ear cress).